We begin with the raw amino-acid sequence, 557 residues long: Coiled-coil domain-containing protein 22 homolog (557 aa).

Coiled coils occupy residues 260–350 (RLGQ…LQSQ) and 489–554 (ELTA…AGRN).

Belongs to the CCDC22 family.

This is Coiled-coil domain-containing protein 22 homolog from Anopheles gambiae (African malaria mosquito).